The following is a 598-amino-acid chain: Elongation factor 4 (598 aa).

One can recognise a tr-type G domain in the interval 4–186 (INIRNFAIIA…AIVSRLPAPS (183 aa)). GTP contacts are provided by residues 16–21 (DHGKST) and 133–136 (NKID).

Belongs to the TRAFAC class translation factor GTPase superfamily. Classic translation factor GTPase family. LepA subfamily.

It is found in the cell inner membrane. The enzyme catalyses GTP + H2O = GDP + phosphate + H(+). Functionally, required for accurate and efficient protein synthesis under certain stress conditions. May act as a fidelity factor of the translation reaction, by catalyzing a one-codon backward translocation of tRNAs on improperly translocated ribosomes. Back-translocation proceeds from a post-translocation (POST) complex to a pre-translocation (PRE) complex, thus giving elongation factor G a second chance to translocate the tRNAs correctly. Binds to ribosomes in a GTP-dependent manner. The chain is Elongation factor 4 from Ehrlichia ruminantium (strain Welgevonden).